We begin with the raw amino-acid sequence, 231 residues long: CLAVATA3/ESR (CLE)-related protein 4B-1 (231 aa).

Residues 1 to 21 form the signal peptide; that stretch reads MATNTMLCLLILSVVLALAFA. Residues 21-83 form a required for secretion from the host cytoplasm to the host apoplasm region; sequence ATNKKGDEEP…SNLLPNNNWM (63 aa). The N-linked (GlcNAc...) asparagine glycan is linked to Asn32. Residues 116–231 form a disordered region; it reads RKTGMHSQRH…APAGPDPIHH (116 aa). Basic and acidic residues-rich tracts occupy residues 125–137 and 144–221; these read HHEE…EKRV and PIHH…EKRG. The stretch at 127–135 is one A-1 repeat; the sequence is EETTLEQEK. Residues 127–219 are 5 X approximate repeat A; it reads EETTLEQEKR…HEETTFEQEK (93 aa). A CLE-1 repeat occupies 136–147; the sequence is RVAGAGPDPIHH. Residues 136–231 are 5 X approximate repeat CLE; that stretch reads RVAGAGPDPI…APAGPDPIHH (96 aa). The A-2 repeat unit spans residues 148–156; that stretch reads QDTTLEQEK. The CLE-2 repeat unit spans residues 157 to 168; sequence RAVPAGPDPKHH. One copy of the A-3 repeat lies at 169–177; that stretch reads EETTLEQEK. One copy of the CLE-3 repeat lies at 178–189; that stretch reads RAVPAGPDPKHH. An A-4 repeat occupies 190–198; the sequence is EETTLEQEK. The stretch at 199–210 is one CLE-4 repeat; that stretch reads RAVPAGPDPKHH. Residues 211 to 219 form an A-5 repeat; the sequence is EETTFEQEK. The CLE-5 repeat unit spans residues 220 to 231; it reads RGAPAGPDPIHH.

The protein belongs to the CLV3/ESR signal peptide family. As to expression, highly expressed exclusively within the dorsal esophageal gland cell during syncytium formation in host plants.

Its subcellular location is the secreted. It is found in the host cytoplasm. It localises to the host extracellular space. The protein localises to the extracellular space. The protein resides in the apoplast. Its function is as follows. Mimics host plant CLE extracellular signal peptides that regulate cell fate. May play a role in the differentiation or division of feeding cells (syncytia) induced in plant roots during infection. The chain is CLAVATA3/ESR (CLE)-related protein 4B-1 (CLE-4B-1) from Globodera rostochiensis (Golden nematode worm).